The primary structure comprises 227 residues: UPF0173 metal-dependent hydrolase BT9727_4343 (227 aa).

Belongs to the UPF0173 family.

This is UPF0173 metal-dependent hydrolase BT9727_4343 from Bacillus thuringiensis subsp. konkukian (strain 97-27).